The sequence spans 689 residues: Glycine--tRNA ligase beta subunit (689 aa).

It belongs to the class-II aminoacyl-tRNA synthetase family. In terms of assembly, tetramer of two alpha and two beta subunits.

It localises to the cytoplasm. The catalysed reaction is tRNA(Gly) + glycine + ATP = glycyl-tRNA(Gly) + AMP + diphosphate. The sequence is that of Glycine--tRNA ligase beta subunit from Yersinia pseudotuberculosis serotype O:1b (strain IP 31758).